Consider the following 154-residue polypeptide: Myoglobin (154 aa).

The 147-residue stretch at 2–148 (GLSDGEWQLV…FRNDIAAKYK (147 aa)) folds into the Globin domain. Residue S4 is modified to Phosphoserine. H65 lines the nitrite pocket. H65 lines the O2 pocket. Residue T68 is modified to Phosphothreonine. Position 94 (H94) interacts with heme b.

The protein belongs to the globin family. Monomeric.

It localises to the cytoplasm. Its subcellular location is the sarcoplasm. It catalyses the reaction Fe(III)-heme b-[protein] + nitric oxide + H2O = Fe(II)-heme b-[protein] + nitrite + 2 H(+). The catalysed reaction is H2O2 + AH2 = A + 2 H2O. Monomeric heme protein which primary function is to store oxygen and facilitate its diffusion within muscle tissues. Reversibly binds oxygen through a pentacoordinated heme iron and enables its timely and efficient release as needed during periods of heightened demand. Depending on the oxidative conditions of tissues and cells, and in addition to its ability to bind oxygen, it also has a nitrite reductase activity whereby it regulates the production of bioactive nitric oxide. Under stress conditions, like hypoxia and anoxia, it also protects cells against reactive oxygen species thanks to its pseudoperoxidase activity. The chain is Myoglobin (MB) from Erinaceus europaeus (Western European hedgehog).